We begin with the raw amino-acid sequence, 429 residues long: Phosphoribosylamine--glycine ligase (429 aa).

The region spanning 109 to 316 is the ATP-grasp domain; that stretch reads KDFLARHNIP…LVELCQAAIA (208 aa). 135–196 serves as a coordination point for ATP; the sequence is VREKGAPIVV…EEFLDGEEAS (62 aa). 2 residues coordinate Mg(2+): Glu-286 and Asn-288.

The protein belongs to the GARS family. Mg(2+) serves as cofactor. It depends on Mn(2+) as a cofactor.

The enzyme catalyses 5-phospho-beta-D-ribosylamine + glycine + ATP = N(1)-(5-phospho-beta-D-ribosyl)glycinamide + ADP + phosphate + H(+). The protein operates within purine metabolism; IMP biosynthesis via de novo pathway; N(1)-(5-phospho-D-ribosyl)glycinamide from 5-phospho-alpha-D-ribose 1-diphosphate: step 2/2. This Vibrio cholerae serotype O1 (strain ATCC 39315 / El Tor Inaba N16961) protein is Phosphoribosylamine--glycine ligase.